The primary structure comprises 285 residues: Bifunctional protein FolD (285 aa).

NADP(+)-binding positions include 166–168 (GAS) and isoleucine 232.

The protein belongs to the tetrahydrofolate dehydrogenase/cyclohydrolase family. In terms of assembly, homodimer.

It carries out the reaction (6R)-5,10-methylene-5,6,7,8-tetrahydrofolate + NADP(+) = (6R)-5,10-methenyltetrahydrofolate + NADPH. It catalyses the reaction (6R)-5,10-methenyltetrahydrofolate + H2O = (6R)-10-formyltetrahydrofolate + H(+). The protein operates within one-carbon metabolism; tetrahydrofolate interconversion. Catalyzes the oxidation of 5,10-methylenetetrahydrofolate to 5,10-methenyltetrahydrofolate and then the hydrolysis of 5,10-methenyltetrahydrofolate to 10-formyltetrahydrofolate. The polypeptide is Bifunctional protein FolD (Vibrio atlanticus (strain LGP32) (Vibrio splendidus (strain Mel32))).